We begin with the raw amino-acid sequence, 206 residues long: RNA pyrophosphohydrolase (206 aa).

One can recognise a Nudix hydrolase domain in the interval 6 to 150 (GYRPNVGIVI…KRDVYRKVMK (145 aa)). A Nudix box motif is present at residues 38–59 (GGINEGENIETAMYRELYEEVG). Over residues 162–191 (KPETVEKPRVERTEKRDFQKRDNQKREFRK) the composition is skewed to basic and acidic residues. Residues 162 to 206 (KPETVEKPRVERTEKRDFQKRDNQKREFRKSARTWNNSHQKGKAQ) are disordered.

This sequence belongs to the Nudix hydrolase family. RppH subfamily. A divalent metal cation serves as cofactor.

Accelerates the degradation of transcripts by removing pyrophosphate from the 5'-end of triphosphorylated RNA, leading to a more labile monophosphorylated state that can stimulate subsequent ribonuclease cleavage. The polypeptide is RNA pyrophosphohydrolase (Actinobacillus pleuropneumoniae serotype 3 (strain JL03)).